Reading from the N-terminus, the 250-residue chain is ATP synthase subunit a (250 aa).

6 consecutive transmembrane segments (helical) span residues 29-49 (ASLF…FATS), 84-104 (FFPL…LGMF), 114-134 (IIVT…YGFY), 143-163 (VFVP…IEII), 193-213 (FVAS…LPLI), and 216-236 (VALT…FAVL).

Belongs to the ATPase A chain family. In terms of assembly, F-type ATPases have 2 components, CF(1) - the catalytic core - and CF(0) - the membrane proton channel. CF(1) has five subunits: alpha(3), beta(3), gamma(1), delta(1), epsilon(1). CF(0) has three main subunits: a(1), b(2) and c(9-12). The alpha and beta chains form an alternating ring which encloses part of the gamma chain. CF(1) is attached to CF(0) by a central stalk formed by the gamma and epsilon chains, while a peripheral stalk is formed by the delta and b chains.

It is found in the cell inner membrane. Its function is as follows. Key component of the proton channel; it plays a direct role in the translocation of protons across the membrane. This chain is ATP synthase subunit a, found in Rhizobium leguminosarum bv. trifolii (strain WSM2304).